A 524-amino-acid chain; its full sequence is 2,3-bisphosphoglycerate-independent phosphoglycerate mutase (524 aa).

Residues Asp13 and Ser63 each coordinate Mn(2+). Catalysis depends on Ser63, which acts as the Phosphoserine intermediate. Substrate-binding positions include His124, 154 to 155 (RD), Arg186, Arg192, 262 to 265 (RADR), and Lys337. 5 residues coordinate Mn(2+): Asp404, His408, Asp445, His446, and His464.

It belongs to the BPG-independent phosphoglycerate mutase family. As to quaternary structure, monomer. Mn(2+) is required as a cofactor.

It carries out the reaction (2R)-2-phosphoglycerate = (2R)-3-phosphoglycerate. It participates in carbohydrate degradation; glycolysis; pyruvate from D-glyceraldehyde 3-phosphate: step 3/5. In terms of biological role, catalyzes the interconversion of 2-phosphoglycerate and 3-phosphoglycerate. In Thermomicrobium roseum (strain ATCC 27502 / DSM 5159 / P-2), this protein is 2,3-bisphosphoglycerate-independent phosphoglycerate mutase.